We begin with the raw amino-acid sequence, 648 residues long: Macrolide export ATP-binding/permease protein MacB (648 aa).

Positions 5–243 (LELKDIRRSY…AGGTEPVVNT (239 aa)) constitute an ABC transporter domain. 41–48 (GASGSGKS) contributes to the ATP binding site. A run of 4 helical transmembrane segments spans residues 273-293 (LLTM…VVVG), 523-543 (LFLT…VMNI), 576-596 (AVLV…LIAF), and 600-620 (LFLP…AFLC).

This sequence belongs to the ABC transporter superfamily. Macrolide exporter (TC 3.A.1.122) family. Homodimer. Part of the tripartite efflux system MacAB-TolC, which is composed of an inner membrane transporter, MacB, a periplasmic membrane fusion protein, MacA, and an outer membrane component, TolC. The complex forms a large protein conduit and can translocate molecules across both the inner and outer membranes. Interacts with MacA.

The protein resides in the cell inner membrane. In terms of biological role, part of the tripartite efflux system MacAB-TolC. MacB is a non-canonical ABC transporter that contains transmembrane domains (TMD), which form a pore in the inner membrane, and an ATP-binding domain (NBD), which is responsible for energy generation. Confers resistance against macrolides. In Shigella boydii serotype 4 (strain Sb227), this protein is Macrolide export ATP-binding/permease protein MacB.